The chain runs to 148 residues: Leghemoglobin-1 (148 aa).

The Globin domain maps to 2–146; sequence GFTDKQEALV…LATAIKKAMK (145 aa). Nitrated tyrosine occurs at positions 24 and 29. S44 lines the heme b pocket. A Phosphoserine modification is found at S44. H61 is a binding site for O2. The heme b site is built by H93 and K96. Nitrated tyrosine is present on Y134.

The protein belongs to the plant globin family. Monomer. In terms of processing, nitrated in effective nodules and particularly in hypoxic conditions; this mechanism may play a protective role in the symbiosis by buffering toxic peroxynitrite NO(2)(-). Nitration level decrease during nodule senescence. Post-translationally, phosphorylation at Ser-44 disrupts the molecular environment of its porphyrin ring oxygen binding pocket, thus leading to a reduced oxygen consumption and to the delivery of oxygen O(2) to symbiosomes. As to expression, root nodules.

It localises to the cytoplasm. It is found in the cytosol. The protein resides in the nucleus. Its function is as follows. Leghemoglobin that reversibly binds oxygen O(2) through a pentacoordinated heme iron. In root nodules, facilitates the diffusion of oxygen to the bacteroids while preventing the bacterial nitrogenase from being inactivated by buffering dioxygen, nitric oxide and carbon monoxide, and promoting the formation of reactive oxygen species (ROS, e.g. H(2)O(2)). This role is essential for symbiotic nitrogen fixation (SNF). In Pisum sativum (Garden pea), this protein is Leghemoglobin-1.